Consider the following 349-residue polypeptide: Protein RecA (349 aa).

65–72 (GPESSGKT) serves as a coordination point for ATP.

Belongs to the RecA family.

It localises to the cytoplasm. Can catalyze the hydrolysis of ATP in the presence of single-stranded DNA, the ATP-dependent uptake of single-stranded DNA by duplex DNA, and the ATP-dependent hybridization of homologous single-stranded DNAs. It interacts with LexA causing its activation and leading to its autocatalytic cleavage. The sequence is that of Protein RecA from Azotobacter vinelandii (strain DJ / ATCC BAA-1303).